Here is a 441-residue protein sequence, read N- to C-terminus: Glutamate-1-semialdehyde 2,1-aminomutase (441 aa).

Position 270 is an N6-(pyridoxal phosphate)lysine (lysine 270).

It belongs to the class-III pyridoxal-phosphate-dependent aminotransferase family. HemL subfamily. As to quaternary structure, homodimer. The cofactor is pyridoxal 5'-phosphate.

It is found in the cytoplasm. It carries out the reaction (S)-4-amino-5-oxopentanoate = 5-aminolevulinate. Its pathway is porphyrin-containing compound metabolism; protoporphyrin-IX biosynthesis; 5-aminolevulinate from L-glutamyl-tRNA(Glu): step 2/2. The sequence is that of Glutamate-1-semialdehyde 2,1-aminomutase (hemL) from Propionibacterium freudenreichii subsp. freudenreichii.